Reading from the N-terminus, the 513-residue chain is RNA-binding protein FUS (513 aa).

A compositionally biased stretch (polar residues) spans 1-14; sequence MASNDYTQQATQSY. The interval 1–273 is disordered; the sequence is MASNDYTQQA…SEQDNSDNNT (273 aa). 3 stretches are compositionally biased toward low complexity: residues 20–36, 43–63, and 84–124; these read QPGQ…YGQQ, QSTD…GQTQ, and SSQS…SGYG. The span at 125–139 shows a compositional bias: gly residues; that stretch reads QPQGGGYGQQSGYGG. Residues 140-164 show a composition bias toward low complexity; the sequence is QQQSYGQQQSYNPPQGYGQQSQYNS. Composition is skewed to gly residues over residues 165–176 and 185–219; these read SGGGGGGGGGSY and SGGG…GGGY. An asymmetric dimethylarginine; alternate mark is found at R211 and R213. Omega-N-methylarginine; alternate is present on residues R211 and R213. 5 positions are modified to asymmetric dimethylarginine: R229, R231, R235, R238, and R246. Positions 231–246 are enriched in gly residues; it reads RGGGRGGRGGMGGSDR. Phosphoserine is present on S264. Residues 272 to 358 enclose the RRM domain; sequence NTIFVQGLGE…NPIKVSFATR (87 aa). The residue at position 273 (T273) is a Phosphothreonine. K321 participates in a covalent cross-link: Glycyl lysine isopeptide (Lys-Gly) (interchain with G-Cter in SUMO2). S327 is subject to Phosphoserine. Disordered regions lie at residues 362–411 and 431–513; these read FNRG…QRAG and CNQC…ERPY. R364, R370, R373, R375, and R381 each carry asymmetric dimethylarginine. The span at 364–408 shows a compositional bias: gly residues; the sequence is RGGGNGRGGRGRGGPMGRGGYGGGGSGGGGRGGFPSGGGGGGGQQ. Asymmetric dimethylarginine; alternate is present on R394. Omega-N-methylarginine; alternate is present on R394. Residues 409–440 form a RanBP2-type zinc finger; it reads RAGDWKCPNPTCENMNFSWRNECNQCKAPKPD. Residues 441 to 455 are compositionally biased toward gly residues; sequence GPGGGPGGSHMGGNY. Over residues 456-480 the composition is skewed to basic and acidic residues; sequence GDDRRGGRGGYDRGGYRGRGGDRGG. Residues R460, R463, R468, R472, R474, R478, R482, and R485 each carry the asymmetric dimethylarginine modification. A compositionally biased stretch (gly residues) spans 481–495; the sequence is FRGGRGGGDRGGFGP. Asymmetric dimethylarginine; alternate is present on R490. Omega-N-methylarginine; alternate is present on R490. The segment covering 498 to 513 has biased composition (basic and acidic residues); sequence MDSRGEHRQDRRERPY.

Belongs to the RRM TET family. In terms of assembly, self-oligomerizes (via N-terminal region). Oligomerization is essential for chromatin binding. Component of nuclear riboprotein complexes. Interacts with ILF3, TDRD3 and SF1. Interacts through its C-terminus with SFRS13A. Interacts with OTUB1 and SARNP. Interacts with LRSAM1. Interacts with SAFB1 in a DNA-dependent manner; this interaction tethers FUS to chromatin. Interacts with MATR3. Interacts with SNRNP70 and POLR2A; these interactions couple RNA transcription and splicing. Interacts (through its RNA-binding domain) with RALY (through its RNA-binding domain); both are components of the same RNPs. Phosphorylated in its N-terminal serine residues upon induced DNA damage. ATM and DNA-PK are able to phosphorylate FUS N-terminal region.

It localises to the nucleus. In terms of biological role, DNA/RNA-binding protein that plays a role in various cellular processes such as transcription regulation, RNA splicing, RNA transport, DNA repair and damage response. Binds to ssRNA containing the consensus sequence 5'-AGGUAA-3'. Binds to nascent pre-mRNAs and acts as a molecular mediator between RNA polymerase II and U1 small nuclear ribonucleoprotein thereby coupling transcription and splicing. Also binds its own pre-mRNA and autoregulates its expression; this autoregulation mechanism is mediated by non-sense-mediated decay. Plays a role in DNA repair mechanisms by promoting D-loop formation and homologous recombination during DNA double-strand break repair. In neuronal cells, plays crucial roles in dendritic spine formation and stability, RNA transport, mRNA stability and synaptic homeostasis. The polypeptide is RNA-binding protein FUS (FUS) (Bos taurus (Bovine)).